The following is a 557-amino-acid chain: UvrABC system protein C (557 aa).

One can recognise a GIY-YIG domain in the interval 14–89 (EEPGVYIFKN…IKKYRPKYNV (76 aa)). A UVR domain is found at 194-229 (EEVFDYLKEKMETHSRMLDFENAAKYRDLLLNLSNV).

It belongs to the UvrC family. Interacts with UvrB in an incision complex.

The protein localises to the cytoplasm. In terms of biological role, the UvrABC repair system catalyzes the recognition and processing of DNA lesions. UvrC both incises the 5' and 3' sides of the lesion. The N-terminal half is responsible for the 3' incision and the C-terminal half is responsible for the 5' incision. The sequence is that of UvrABC system protein C from Thermotoga petrophila (strain ATCC BAA-488 / DSM 13995 / JCM 10881 / RKU-1).